The primary structure comprises 228 residues: Aquaporin Z 2 (228 aa).

The next 2 helical transmembrane spans lie at 9–29 and 34–54; these read FFGT…AAAF and IGFT…AYAV. Positions 63 to 65 match the NPA 1 motif; that stretch reads NPA. Transmembrane regions (helical) follow at residues 82-102, 129-149, and 158-178; these read VPYV…LYVI, LVSA…VILG, and GFAP…SIPV. The NPA 2 signature appears at 184–186; the sequence is NPA. Residues 204 to 224 traverse the membrane as a helical segment; sequence WLFWLAPIVGGAAGAVIWKLF.

This sequence belongs to the MIP/aquaporin (TC 1.A.8) family. As to quaternary structure, homotetramer.

Its subcellular location is the cell inner membrane. The catalysed reaction is H2O(in) = H2O(out). Its function is as follows. Channel that permits osmotically driven movement of water in both directions. It is involved in the osmoregulation and in the maintenance of cell turgor during volume expansion in rapidly growing cells. It mediates rapid entry or exit of water in response to abrupt changes in osmolarity. The protein is Aquaporin Z 2 of Agrobacterium fabrum (strain C58 / ATCC 33970) (Agrobacterium tumefaciens (strain C58)).